Reading from the N-terminus, the 827-residue chain is Glycerol-3-phosphate acyltransferase (827 aa).

An HXXXXD motif motif is present at residues 325-330; sequence CHRSHM.

Belongs to the GPAT/DAPAT family.

It is found in the cell inner membrane. It catalyses the reaction sn-glycerol 3-phosphate + an acyl-CoA = a 1-acyl-sn-glycero-3-phosphate + CoA. It participates in phospholipid metabolism; CDP-diacylglycerol biosynthesis; CDP-diacylglycerol from sn-glycerol 3-phosphate: step 1/3. This chain is Glycerol-3-phosphate acyltransferase, found in Escherichia coli (strain SMS-3-5 / SECEC).